The following is a 95-amino-acid chain: Aspartyl/glutamyl-tRNA(Asn/Gln) amidotransferase subunit C (95 aa).

Belongs to the GatC family. Heterotrimer of A, B and C subunits.

The catalysed reaction is L-glutamyl-tRNA(Gln) + L-glutamine + ATP + H2O = L-glutaminyl-tRNA(Gln) + L-glutamate + ADP + phosphate + H(+). It carries out the reaction L-aspartyl-tRNA(Asn) + L-glutamine + ATP + H2O = L-asparaginyl-tRNA(Asn) + L-glutamate + ADP + phosphate + 2 H(+). Its function is as follows. Allows the formation of correctly charged Asn-tRNA(Asn) or Gln-tRNA(Gln) through the transamidation of misacylated Asp-tRNA(Asn) or Glu-tRNA(Gln) in organisms which lack either or both of asparaginyl-tRNA or glutaminyl-tRNA synthetases. The reaction takes place in the presence of glutamine and ATP through an activated phospho-Asp-tRNA(Asn) or phospho-Glu-tRNA(Gln). This is Aspartyl/glutamyl-tRNA(Asn/Gln) amidotransferase subunit C from Nitratidesulfovibrio vulgaris (strain DSM 19637 / Miyazaki F) (Desulfovibrio vulgaris).